The primary structure comprises 98 residues: NADH-ubiquinone oxidoreductase chain 4L (98 aa).

3 consecutive transmembrane segments (helical) span residues 1 to 21 (MSLT…GLLM), 29 to 49 (SLLC…MTIL), and 61 to 81 (IILL…LVMV).

This sequence belongs to the complex I subunit 4L family. Core subunit of respiratory chain NADH dehydrogenase (Complex I) which is composed of 45 different subunits.

The protein resides in the mitochondrion inner membrane. The catalysed reaction is a ubiquinone + NADH + 5 H(+)(in) = a ubiquinol + NAD(+) + 4 H(+)(out). In terms of biological role, core subunit of the mitochondrial membrane respiratory chain NADH dehydrogenase (Complex I) which catalyzes electron transfer from NADH through the respiratory chain, using ubiquinone as an electron acceptor. Part of the enzyme membrane arm which is embedded in the lipid bilayer and involved in proton translocation. This is NADH-ubiquinone oxidoreductase chain 4L (MT-ND4L) from Vampyressa brocki (Brock's yellow-eared bat).